Reading from the N-terminus, the 643-residue chain is 1-deoxy-D-xylulose-5-phosphate synthase (643 aa).

Residues His71 and 112–114 contribute to the thiamine diphosphate site; that span reads SHA. Asp144 contacts Mg(2+). Thiamine diphosphate is bound by residues 145 to 146, Asn173, Tyr284, and Glu365; that span reads GA. Asn173 serves as a coordination point for Mg(2+).

Belongs to the transketolase family. DXPS subfamily. As to quaternary structure, homodimer. The cofactor is Mg(2+). It depends on thiamine diphosphate as a cofactor.

The enzyme catalyses D-glyceraldehyde 3-phosphate + pyruvate + H(+) = 1-deoxy-D-xylulose 5-phosphate + CO2. Its pathway is metabolic intermediate biosynthesis; 1-deoxy-D-xylulose 5-phosphate biosynthesis; 1-deoxy-D-xylulose 5-phosphate from D-glyceraldehyde 3-phosphate and pyruvate: step 1/1. Its function is as follows. Catalyzes the acyloin condensation reaction between C atoms 2 and 3 of pyruvate and glyceraldehyde 3-phosphate to yield 1-deoxy-D-xylulose-5-phosphate (DXP). The chain is 1-deoxy-D-xylulose-5-phosphate synthase from Mycobacterium leprae (strain Br4923).